An 85-amino-acid chain; its full sequence is Translation initiation factor IF-1 2 (85 aa).

In terms of domain architecture, S1-like spans 1-72; that stretch reads MAKEELIEMH…SKGRITFRHI (72 aa).

Belongs to the IF-1 family. Component of the 30S ribosomal translation pre-initiation complex which assembles on the 30S ribosome in the order IF-2 and IF-3, IF-1 and N-formylmethionyl-tRNA(fMet); mRNA recruitment can occur at any time during PIC assembly.

The protein localises to the cytoplasm. In terms of biological role, one of the essential components for the initiation of protein synthesis. Stabilizes the binding of IF-2 and IF-3 on the 30S subunit to which N-formylmethionyl-tRNA(fMet) subsequently binds. Helps modulate mRNA selection, yielding the 30S pre-initiation complex (PIC). Upon addition of the 50S ribosomal subunit IF-1, IF-2 and IF-3 are released leaving the mature 70S translation initiation complex. In Polaromonas sp. (strain JS666 / ATCC BAA-500), this protein is Translation initiation factor IF-1 2.